Consider the following 394-residue polypeptide: C-19 steroid 1alpha-hydroxylase (394 aa).

Heme b is bound by residues H81, R85, R281, G335, H338, and C340.

This sequence belongs to the cytochrome P450 family. It depends on heme b as a cofactor.

The catalysed reaction is testosterone + 2 reduced [2Fe-2S]-[ferredoxin] + O2 + 2 H(+) = 1alpha-hydroxytestosterone + 2 oxidized [2Fe-2S]-[ferredoxin] + H2O. It catalyses the reaction androst-4-ene-3,17-dione + 2 reduced [2Fe-2S]-[ferredoxin] + O2 + 2 H(+) = 1alpha-hydroxyandrost-4-ene-3,17-dione + 2 oxidized [2Fe-2S]-[ferredoxin] + H2O. Hydroxylase that can catalyze the in vitro conversion of the sesquiterpenoid nootkatone, a natural organic compound produced by some plants, to at least five hydrophilic products. The native ferredoxin reductase FdR_B and either Fdx2 or Fdx8 ferredoxins can act as the redox partners for the conversion of nootkatone. In terms of biological role, in addition, acts as a steroid 1alpha-hydroxylase, when associated in vitro with the surrogate redox partners bovine adrenodoxin (Adx) and adrenodoxin reductase (Adr). Acts on several C-19 steroid substrates, including testosterone and androstenedione, which are hydroxylated to 1alpha-hydroxytestosterone and 1alpha-hydroxyandrostenedione, respectively. Can use their derivatives testosterone-acetate and 11-oxoandrostenedione, but not vitamin D3 and 25-hydroxyvitamin D3. Also catalyzes the hydroxylation of the C-21 steroid 11-deoxycorticosterone to 1alpha-hydroxy-11-deoxycorticosterone. Catalyzes the hydroxylation of the C-21 steroid progesterone, leading to the formation of seven products: two major (1alpha-hydroxyprogesterone and 17alpha-hydroxyprogesterone) and five minor products. This is C-19 steroid 1alpha-hydroxylase from Sorangium cellulosum (strain So ce56) (Polyangium cellulosum (strain So ce56)).